The primary structure comprises 216 residues: UPF0502 protein PFL_4004 (216 aa).

It belongs to the UPF0502 family.

The polypeptide is UPF0502 protein PFL_4004 (Pseudomonas fluorescens (strain ATCC BAA-477 / NRRL B-23932 / Pf-5)).